Reading from the N-terminus, the 213-residue chain is Ribosomal RNA small subunit methyltransferase G (213 aa).

S-adenosyl-L-methionine contacts are provided by residues glycine 55, 105-106 (AE), and arginine 124.

This sequence belongs to the methyltransferase superfamily. RNA methyltransferase RsmG family.

It is found in the cytoplasm. Specifically methylates the N7 position of a guanine in 16S rRNA. In Fervidobacterium nodosum (strain ATCC 35602 / DSM 5306 / Rt17-B1), this protein is Ribosomal RNA small subunit methyltransferase G.